A 676-amino-acid polypeptide reads, in one-letter code: Capsid vertex component 1 (676 aa).

Positions 253–264 (HPVRPSSSRVAS) are enriched in low complexity. A disordered region spans residues 253–308 (HPVRPSSSRVASGLLQSAKGHGAQTSNTDPINNGSFDGVLEPPGQGRFTGKKNNSS). A compositionally biased stretch (polar residues) spans 275 to 287 (AQTSNTDPINNGS).

This sequence belongs to the herpesviridae CVC1 protein family. As to quaternary structure, interacts (via C-terminus) with capsid vertex component 2/CVC2.

The protein resides in the virion. It is found in the host nucleus. Capsid vertex-specific component that plays a role during viral DNA encapsidation, assuring correct genome cleavage and presumably stabilizing capsids that contain full-length viral genomes. The protein is Capsid vertex component 1 of Varicella-zoster virus (strain Dumas) (HHV-3).